We begin with the raw amino-acid sequence, 523 residues long: Alanine aminotransferase 2 (523 aa).

The tract at residues 1-25 (MQRAAALVRRGCGPRTPSSWGRSQS) is disordered. Pyridoxal 5'-phosphate contacts are provided by A187, S188, Y216, N271, and S338. At K341 the chain carries N6-(pyridoxal phosphate)lysine. Position 350 (R350) interacts with pyridoxal 5'-phosphate. N6-acetyllysine occurs at positions 415, 505, and 512.

Belongs to the class-I pyridoxal-phosphate-dependent aminotransferase family. Alanine aminotransferase subfamily. In terms of assembly, homodimer. Requires pyridoxal 5'-phosphate as cofactor. As to expression, expressed at high levels in muscle, adipose tissue, kidney and brain and at lower levels in the liver and breast.

It catalyses the reaction L-alanine + 2-oxoglutarate = pyruvate + L-glutamate. Its pathway is amino-acid degradation; L-alanine degradation via transaminase pathway; pyruvate from L-alanine: step 1/1. In terms of biological role, catalyzes the reversible transamination between alanine and 2-oxoglutarate to form pyruvate and glutamate. The chain is Alanine aminotransferase 2 (GPT2) from Homo sapiens (Human).